The following is a 136-amino-acid chain: Nucleoside diphosphate kinase (136 aa).

Residues Lys-10, Phe-58, Arg-86, Thr-92, Arg-104, and Asn-114 each coordinate ATP. His-117 acts as the Pros-phosphohistidine intermediate in catalysis.

The protein belongs to the NDK family. Homotetramer. Requires Mg(2+) as cofactor.

It is found in the cytoplasm. It catalyses the reaction a 2'-deoxyribonucleoside 5'-diphosphate + ATP = a 2'-deoxyribonucleoside 5'-triphosphate + ADP. It carries out the reaction a ribonucleoside 5'-diphosphate + ATP = a ribonucleoside 5'-triphosphate + ADP. Major role in the synthesis of nucleoside triphosphates other than ATP. The ATP gamma phosphate is transferred to the NDP beta phosphate via a ping-pong mechanism, using a phosphorylated active-site intermediate. This Corynebacterium jeikeium (strain K411) protein is Nucleoside diphosphate kinase.